A 493-amino-acid polypeptide reads, in one-letter code: Glycylpeptide N-tetradecanoyltransferase (493 aa).

45–48 (HKFW) contributes to the tetradecanoyl-CoA binding site. Residues 53–73 (VPQITGSGAPAPIEEGPIDDP) are disordered. Tetradecanoyl-CoA contacts are provided by residues 182-184 (LCV) and 190-194 (SKRLA). Leucine 493 functions as the Proton acceptor; via carboxylate in the catalytic mechanism.

The protein belongs to the NMT family. As to quaternary structure, monomer.

Its subcellular location is the cytoplasm. The catalysed reaction is N-terminal glycyl-[protein] + tetradecanoyl-CoA = N-tetradecanoylglycyl-[protein] + CoA + H(+). In terms of biological role, adds a myristoyl group to the N-terminal glycine residue of certain cellular proteins. In Cryptococcus neoformans var. neoformans serotype D (strain B-3501A) (Filobasidiella neoformans), this protein is Glycylpeptide N-tetradecanoyltransferase.